A 720-amino-acid chain; its full sequence is Serrate RNA effector molecule (720 aa).

3 disordered regions span residues Met1–Arg192, Leu288–Asp335, and Glu361–Gly380. Over residues Ser33–Pro47 the composition is skewed to low complexity. Basic and acidic residues predominate over residues Leu48–Ser76. Residues Ser76, Ser90, and Ser92 each carry the phosphoserine modification. Basic residues predominate over residues Asp99–Tyr115. Composition is skewed to basic and acidic residues over residues Arg116–Arg126 and Pro136–His164. A compositionally biased stretch (polar residues) spans Leu288–Pro297. Over residues Glu368–His378 the composition is skewed to basic and acidic residues. Residues Tyr498–His523 form a C2H2-type zinc finger. 2 disordered regions span residues Tyr543 to Gly622 and Arg666 to Leu687. Over residues Pro570–Asn607 the composition is skewed to basic and acidic residues. Gly residues predominate over residues Asp608–Gly622. Ser689 is subject to Phosphoserine.

It belongs to the ARS2 family. Interacts with HYL1. Interacts with RCF3, RS40 and RS41. In terms of tissue distribution, expressed in shoot meristems and in emerging organ primordia throughout development.

It localises to the nucleus. The protein localises to the nucleus speckle. Its function is as follows. Acts as a mediator between the cap-binding complex (CBC) and both the pre-mRNA splicing and primary microRNAs (miRNAs) processing machinery. Required for proper processing of primary miRNAs to miRNAs, thereby playing a role in RNA-mediated gene silencing (RNAi) by miRNAs. Does not participate in sense post-transcriptional gene silencing. Acts as a regulator of meristem activity and adaxial leaf fate via the miRNA gene-silencing pathway by regulating the expression of PHB and by limiting the competence of shoot tissue to respond to KNOX expression. Its function is however not limited to miRNA-mediated repression of leaf polarity genes, but rather acts as a general regulator of primary microRNAs processing. Also critical for the accumulation of the trans-acting small interfering RNA (ta-siRNA). Required for pre-mRNA splicing. In Arabidopsis thaliana (Mouse-ear cress), this protein is Serrate RNA effector molecule (SE).